The following is a 342-amino-acid chain: Trans-3-hydroxy-L-proline dehydratase (342 aa).

The active-site Proton acceptor is S90. Residues 91–92 (GS), D252, and 257–258 (GT) each bind substrate.

The protein belongs to the proline racemase family.

It carries out the reaction trans-3-hydroxy-L-proline = 1-pyrroline-2-carboxylate + H2O. The catalysed reaction is trans-4-hydroxy-L-proline = cis-4-hydroxy-D-proline. In terms of biological role, catalyzes the dehydration of trans-3-hydroxy-L-proline (t3LHyp) to Delta(1)-pyrroline-2-carboxylate (Pyr2C). Can also catalyze the epimerization of trans-4-hydroxy-L-proline (t4LHyp) to cis-4-hydroxy-D-proline (c4DHyp), albeit with 30-fold lower efficiency. Is likely involved in both degradation pathways that convert t3LHyp to L-proline and t4LHyp to alpha-ketoglutarate, which would allow A.tumefaciens to grow on t3LHyp or t4LHyp as a sole carbon source. Displays no proline racemase activity. The sequence is that of Trans-3-hydroxy-L-proline dehydratase from Agrobacterium fabrum (strain C58 / ATCC 33970) (Agrobacterium tumefaciens (strain C58)).